Consider the following 213-residue polypeptide: Pyridoxine/pyridoxamine 5'-phosphate oxidase (213 aa).

Substrate-binding positions include 10–13 (REEY) and Lys68. FMN is bound by residues 63–68 (RMLLLK), 78–79 (FT), Lys85, and Gln107. Positions 125, 129, and 133 each coordinate substrate. Residues 142-143 (QS) and Trp186 contribute to the FMN site. 192–194 (RLH) lines the substrate pocket. Arg196 is a binding site for FMN.

It belongs to the pyridoxamine 5'-phosphate oxidase family. As to quaternary structure, homodimer. FMN serves as cofactor.

It catalyses the reaction pyridoxamine 5'-phosphate + O2 + H2O = pyridoxal 5'-phosphate + H2O2 + NH4(+). It carries out the reaction pyridoxine 5'-phosphate + O2 = pyridoxal 5'-phosphate + H2O2. It functions in the pathway cofactor metabolism; pyridoxal 5'-phosphate salvage; pyridoxal 5'-phosphate from pyridoxamine 5'-phosphate: step 1/1. Its pathway is cofactor metabolism; pyridoxal 5'-phosphate salvage; pyridoxal 5'-phosphate from pyridoxine 5'-phosphate: step 1/1. Its function is as follows. Catalyzes the oxidation of either pyridoxine 5'-phosphate (PNP) or pyridoxamine 5'-phosphate (PMP) into pyridoxal 5'-phosphate (PLP). This is Pyridoxine/pyridoxamine 5'-phosphate oxidase from Nocardioides sp. (strain ATCC BAA-499 / JS614).